The sequence spans 70 residues: MSFRGTVKWFSKDKGYGFITREDTNADVFVHFTDIQMEGFKTLQKGQKVEFDVVEDTKGPRAKNVRVLGE.

The CSD domain maps to 5 to 65 (GTVKWFSKDK…DTKGPRAKNV (61 aa)).

Its subcellular location is the cytoplasm. This chain is Cold shock-like protein (csp), found in Aquifex aeolicus (strain VF5).